Consider the following 505-residue polypeptide: Deoxyguanosinetriphosphate triphosphohydrolase (505 aa).

The HD domain occupies 66 to 273; that stretch reads RLTHSMEVQQ…MEAADDISYC (208 aa).

This sequence belongs to the dGTPase family. Type 1 subfamily. In terms of assembly, homotetramer. Mg(2+) is required as a cofactor.

It carries out the reaction dGTP + H2O = 2'-deoxyguanosine + triphosphate + H(+). In terms of biological role, dGTPase preferentially hydrolyzes dGTP over the other canonical NTPs. The polypeptide is Deoxyguanosinetriphosphate triphosphohydrolase (Salmonella enteritidis PT4 (strain P125109)).